A 190-amino-acid polypeptide reads, in one-letter code: Elongation factor P-like protein (190 aa).

The protein belongs to the elongation factor P family.

The chain is Elongation factor P-like protein from Cronobacter sakazakii (strain ATCC BAA-894) (Enterobacter sakazakii).